Here is a 239-residue protein sequence, read N- to C-terminus: Pimeloyl-[acyl-carrier protein] methyl ester esterase (239 aa).

Substrate contacts are provided by residues W20, 77–78, and 138–142; these read SM and FISLQ. S77 serves as the catalytic Nucleophile. Residues D192 and H220 contribute to the active site. H220 provides a ligand contact to substrate.

This sequence belongs to the AB hydrolase superfamily. Carboxylesterase BioH family. In terms of assembly, monomer.

It localises to the cytoplasm. It catalyses the reaction 6-carboxyhexanoyl-[ACP] methyl ester + H2O = 6-carboxyhexanoyl-[ACP] + methanol + H(+). The protein operates within cofactor biosynthesis; biotin biosynthesis. In terms of biological role, the physiological role of BioH is to remove the methyl group introduced by BioC when the pimeloyl moiety is complete. It allows to synthesize pimeloyl-ACP via the fatty acid synthetic pathway through the hydrolysis of the ester bonds of pimeloyl-ACP esters. This Legionella pneumophila (strain Paris) protein is Pimeloyl-[acyl-carrier protein] methyl ester esterase.